Consider the following 238-residue polypeptide: Arginine ABC transporter permease protein ArtQ (238 aa).

Topologically, residues 1–14 are periplasmic; the sequence is MNEFFPLASAAGMT. One can recognise an ABC transmembrane type-1 domain in the interval 11 to 223; that stretch reads AGMTVGLAVC…VITLLSQYIL (213 aa). A helical membrane pass occupies residues 15–35; it reads VGLAVCALIVGLALAMFFAVW. The Cytoplasmic portion of the chain corresponds to 36–48; it reads ESAKWRPVAWAGS. The chain crosses the membrane as a helical span at residues 49–69; sequence ALVTILRGLPEILVVLFIYFG. Over 70 to 98 the chain is Periplasmic; the sequence is SSQLLLTLSDGFTINLGFVQIPVQMDIEN. A helical membrane pass occupies residues 99-119; the sequence is FDVSPFLCGVIALSLLYAAYA. The Cytoplasmic segment spans residues 120 to 168; the sequence is SQTLRGALKAVPVGQWESGQALGLSKSAIFFRLVMPQMWRHALPGLGNQ. The chain crosses the membrane as a helical span at residues 169-189; that stretch reads WLVLLKDTALVSLISVNDLML. Residues 190-201 lie on the Periplasmic side of the membrane; sequence QTKSIATRTQEP. The helical transmembrane segment at 202–222 threads the bilayer; it reads FTWYIVAAAIYLVITLLSQYI. Residues 223–238 are Cytoplasmic-facing; that stretch reads LKRIDLRATRFERRPS.

Belongs to the binding-protein-dependent transport system permease family. HisMQ subfamily. The complex is composed of two ATP-binding proteins (ArtP), two transmembrane proteins (ArtM and ArtQ) and two solute-binding proteins (ArtJ and ArtI).

The protein resides in the cell inner membrane. Its function is as follows. Part of the ABC transporter complex ArtPIQMJ involved in arginine transport. Probably responsible for the translocation of the substrate across the membrane. This is Arginine ABC transporter permease protein ArtQ (artQ) from Escherichia coli O6:H1 (strain CFT073 / ATCC 700928 / UPEC).